The chain runs to 253 residues: Ubiquinone/menaquinone biosynthesis C-methyltransferase UbiE (253 aa).

S-adenosyl-L-methionine contacts are provided by residues Thr76, Asp97, and 125–126 (NA).

Belongs to the class I-like SAM-binding methyltransferase superfamily. MenG/UbiE family.

It catalyses the reaction a 2-demethylmenaquinol + S-adenosyl-L-methionine = a menaquinol + S-adenosyl-L-homocysteine + H(+). It carries out the reaction a 2-methoxy-6-(all-trans-polyprenyl)benzene-1,4-diol + S-adenosyl-L-methionine = a 5-methoxy-2-methyl-3-(all-trans-polyprenyl)benzene-1,4-diol + S-adenosyl-L-homocysteine + H(+). It functions in the pathway quinol/quinone metabolism; menaquinone biosynthesis; menaquinol from 1,4-dihydroxy-2-naphthoate: step 2/2. It participates in cofactor biosynthesis; ubiquinone biosynthesis. Its function is as follows. Methyltransferase required for the conversion of demethylmenaquinol (DMKH2) to menaquinol (MKH2) and the conversion of 2-polyprenyl-6-methoxy-1,4-benzoquinol (DDMQH2) to 2-polyprenyl-3-methyl-6-methoxy-1,4-benzoquinol (DMQH2). This chain is Ubiquinone/menaquinone biosynthesis C-methyltransferase UbiE, found in Stenotrophomonas maltophilia (strain K279a).